A 1969-amino-acid polypeptide reads, in one-letter code: Echinoderm microtubule-associated protein-like 5 (1969 aa).

WD repeat units follow at residues 59 to 100, 104 to 145, 148 to 187, 195 to 233, 235 to 273, 280 to 321, 323 to 362, 406 to 445, 449 to 488, and 561 to 601; these read GHSD…TISV, VHTH…MLSM, GHTD…LTPK, GDLQ…RTIQ, AHAA…TVID, GYKG…LIMQ, HCEG…LIAR, DRKE…KKVG, GSLS…EVTS, and GHSA…KLKD. The tract at residues 609-633 is disordered; it reads ESLADSHSDESDSDLSDVPELDSEI. Acidic residues predominate over residues 619 to 633; sequence SDSDLSDVPELDSEI. WD repeat units lie at residues 725–766, 770–811, 814–853, 861–900, 901–940, 996–1035, 1038–1077, 1080–1120, and 1236–1276; these read GHDD…PLSI, HHQY…KLSI, GSKD…LIGR, GKND…KTVK, AHDG…KTYA, HMEG…CMLA, KLKK…DLVS, HRKD…RVGI, and AHST…YREK. 2 disordered regions span residues 1274–1297 and 1326–1355; these read REKR…YDSD and QQKE…NVGK. The span at 1281–1294 shows a compositional bias: acidic residues; it reads SEESDIDSEEDGGY. The span at 1326–1337 shows a compositional bias: basic and acidic residues; sequence QQKEPSIDERPP. WD repeat units lie at residues 1412–1463, 1467–1508, 1511–1550, 1560–1598, 1600–1646, 1691–1731, 1733–1774, 1775–1814, 1887–1926, and 1932–1969; these read EHND…TLSI, YHSK…KIAS, GHNQ…LLSK, ARMQ…RIVA, AHNG…RAFR, GHVD…MLNK, NLGH…GKKR, DRRC…TLNR, AEKA…KFAK, and GHSP…HTPH.

Belongs to the WD repeat EMAP family.

Its subcellular location is the cytoplasm. It localises to the cytoskeleton. In terms of biological role, may modify the assembly dynamics of microtubules, such that microtubules are slightly longer, but more dynamic. This chain is Echinoderm microtubule-associated protein-like 5 (EML5), found in Homo sapiens (Human).